A 229-amino-acid chain; its full sequence is (S)-2-haloacid dehalogenase 2 (229 aa).

Aspartate 10 functions as the Nucleophile in the catalytic mechanism. An (S)-2-haloacid is bound by residues 11–12, arginine 41, and 118–119; these read LY and SN. Residues 175-180 form an important for catalytic activity region; it reads SSNAWD.

The protein belongs to the HAD-like hydrolase superfamily. S-2-haloalkanoic acid dehalogenase family.

The catalysed reaction is an (S)-2-haloacid + H2O = a (2R)-2-hydroxycarboxylate + a halide anion + H(+). The enzyme catalyses (S)-2-chloropropanoate + H2O = (R)-lactate + chloride + H(+). Catalyzes the hydrolytic dehalogenation of small (S)-2-haloalkanoic acids to yield the corresponding (R)-2-hydroxyalkanoic acids. Acts on acids of short chain lengths, C(2) to C(4), with inversion of configuration at C-2. Active with 2-halogenated carboxylic acids and converts only the S-isomer (or L-isomer) of 2-chloropropionic acid with inversion of configuration to produce R-lactate (or D-isomer). This Pseudomonas sp. (strain CBS-3) protein is (S)-2-haloacid dehalogenase 2.